The chain runs to 429 residues: Glucose-6-phosphate isomerase (429 aa).

The active-site Proton donor is E282. Catalysis depends on residues H303 and K418.

The protein belongs to the GPI family.

The protein resides in the cytoplasm. The catalysed reaction is alpha-D-glucose 6-phosphate = beta-D-fructose 6-phosphate. The protein operates within carbohydrate biosynthesis; gluconeogenesis. Its pathway is carbohydrate degradation; glycolysis; D-glyceraldehyde 3-phosphate and glycerone phosphate from D-glucose: step 2/4. Functionally, catalyzes the reversible isomerization of glucose-6-phosphate to fructose-6-phosphate. The protein is Glucose-6-phosphate isomerase of Mesomycoplasma hyopneumoniae (strain J / ATCC 25934 / NCTC 10110) (Mycoplasma hyopneumoniae).